A 488-amino-acid chain; its full sequence is MTMTTPLADAMSQLVIYDSLTGRKQAFKPLATGKVGMYVCGMTVYDYCHIGHARVMVGFDMAVRWLAQLGYDVNYVRNITDIDDKIITRAAENGEEIGTLTQRFITAMHEDATALGCLSPDAEPRATDHIDEMQQMIETLVSNDYAYAGDNGDVYYAVDSFADYGKLSKRNLDDMQAGSRVEVENDKRNPFDFVLWKAAKPDEPQWASAWGQGRPGWHIECSAMSTKCLGNTFDIHGGGHDLQFPHHENEIAQSEAATGCEYARNWMHVGFINVDGEKMSKSLGNFFTIRDVMAKYLPETVRFFLLSSHYRSQVNFSDSALDESHNSLSRLYQALKVAEQQKGKVLIIDEALINNAYASAVGQDFIKAMNDDFNSSTAISVLFGLARDINKASKAQDVETAWQLAQHLKALAQTLNILQQPVQQFLQAVIGEVAEDSLTDEAIDGLIIERADAKTNKNFARADEIRVQLKEAGIELEDSRAGTTWRRA.

Cysteine 40 lines the Zn(2+) pocket. The short motif at 42-52 (MTVYDYCHIGH) is the 'HIGH' region element. Zn(2+) contacts are provided by cysteine 221, histidine 246, and glutamate 250. A 'KMSKS' region motif is present at residues 278–282 (KMSKS). Lysine 281 contributes to the ATP binding site.

Belongs to the class-I aminoacyl-tRNA synthetase family. Monomer. Zn(2+) serves as cofactor.

Its subcellular location is the cytoplasm. The enzyme catalyses tRNA(Cys) + L-cysteine + ATP = L-cysteinyl-tRNA(Cys) + AMP + diphosphate. This is Cysteine--tRNA ligase from Psychrobacter cryohalolentis (strain ATCC BAA-1226 / DSM 17306 / VKM B-2378 / K5).